The following is a 303-amino-acid chain: Terpene synthase (303 aa).

Mg(2+) contacts are provided by aspartate 69 and aspartate 73. Residues 69–73 carry the DDXXD motif motif; it reads DDIQD.

It belongs to the FPP/GGPP synthase family. Requires Mg(2+) as cofactor.

It catalyses the reaction (2E)-geranyl diphosphate + H2O = (2E)-geraniol + diphosphate. Its function is as follows. Terpene synthase that is able to convert geraniol diphosphate to geraniol in tea leaves. The chain is Terpene synthase from Matsumurasca onukii (Tea green leafhopper).